A 101-amino-acid chain; its full sequence is UPF0235 protein MmarC5_0538 (101 aa).

The protein belongs to the UPF0235 family.

The protein is UPF0235 protein MmarC5_0538 of Methanococcus maripaludis (strain C5 / ATCC BAA-1333).